A 125-amino-acid polypeptide reads, in one-letter code: Fluoride-specific ion channel FluC (125 aa).

The next 4 membrane-spanning stretches (helical) occupy residues valine 6–isoleucine 26, phenylalanine 35–alanine 55, leucine 66–isoleucine 86, and alanine 100–leucine 120. Residues glycine 76 and threonine 79 each coordinate Na(+).

It belongs to the fluoride channel Fluc/FEX (TC 1.A.43) family.

The protein resides in the cell inner membrane. The catalysed reaction is fluoride(in) = fluoride(out). With respect to regulation, na(+) is not transported, but it plays an essential structural role and its presence is essential for fluoride channel function. Its function is as follows. Fluoride-specific ion channel. Important for reducing fluoride concentration in the cell, thus reducing its toxicity. The polypeptide is Fluoride-specific ion channel FluC (Gloeobacter violaceus (strain ATCC 29082 / PCC 7421)).